Reading from the N-terminus, the 314-residue chain is DNA-directed RNA polymerase subunit alpha (314 aa).

Positions 1 to 228 are alpha N-terminal domain (alpha-NTD); the sequence is MIEIEKPKIE…EHLNIFVGLT (228 aa). The interval 246 to 314 is alpha C-terminal domain (alpha-CTD); sequence EKVLEMTIEE…ELGLGLRKDD (69 aa).

It belongs to the RNA polymerase alpha chain family. Homodimer. The RNAP catalytic core consists of 2 alpha, 1 beta, 1 beta' and 1 omega subunit. When a sigma factor is associated with the core the holoenzyme is formed, which can initiate transcription.

It carries out the reaction RNA(n) + a ribonucleoside 5'-triphosphate = RNA(n+1) + diphosphate. In terms of biological role, DNA-dependent RNA polymerase catalyzes the transcription of DNA into RNA using the four ribonucleoside triphosphates as substrates. The sequence is that of DNA-directed RNA polymerase subunit alpha from Bacillus velezensis (strain DSM 23117 / BGSC 10A6 / LMG 26770 / FZB42) (Bacillus amyloliquefaciens subsp. plantarum).